Consider the following 326-residue polypeptide: Lipoyl synthase (326 aa).

[4Fe-4S] cluster-binding residues include Cys-68, Cys-73, Cys-79, Cys-94, Cys-98, Cys-101, and Ser-308. Residues 80 to 297 enclose the Radical SAM core domain; it reads FNHGTATFMI…KDVAMGLGFS (218 aa).

Belongs to the radical SAM superfamily. Lipoyl synthase family. [4Fe-4S] cluster is required as a cofactor.

Its subcellular location is the cytoplasm. It carries out the reaction [[Fe-S] cluster scaffold protein carrying a second [4Fe-4S](2+) cluster] + N(6)-octanoyl-L-lysyl-[protein] + 2 oxidized [2Fe-2S]-[ferredoxin] + 2 S-adenosyl-L-methionine + 4 H(+) = [[Fe-S] cluster scaffold protein] + N(6)-[(R)-dihydrolipoyl]-L-lysyl-[protein] + 4 Fe(3+) + 2 hydrogen sulfide + 2 5'-deoxyadenosine + 2 L-methionine + 2 reduced [2Fe-2S]-[ferredoxin]. The protein operates within protein modification; protein lipoylation via endogenous pathway; protein N(6)-(lipoyl)lysine from octanoyl-[acyl-carrier-protein]: step 2/2. Catalyzes the radical-mediated insertion of two sulfur atoms into the C-6 and C-8 positions of the octanoyl moiety bound to the lipoyl domains of lipoate-dependent enzymes, thereby converting the octanoylated domains into lipoylated derivatives. The chain is Lipoyl synthase from Aeromonas salmonicida (strain A449).